The primary structure comprises 166 residues: Lipoprotein signal peptidase (166 aa).

The next 3 helical transmembrane spans lie at 12-32 (WLWL…LILQ), 70-90 (WFFA…MYRS), and 102-122 (ALII…GFVV). Residues D123 and D141 contribute to the active site. Residues 137–157 (FNLADSAICIGAALIVLEGFL) traverse the membrane as a helical segment.

Belongs to the peptidase A8 family.

The protein localises to the cell inner membrane. The enzyme catalyses Release of signal peptides from bacterial membrane prolipoproteins. Hydrolyzes -Xaa-Yaa-Zaa-|-(S,diacylglyceryl)Cys-, in which Xaa is hydrophobic (preferably Leu), and Yaa (Ala or Ser) and Zaa (Gly or Ala) have small, neutral side chains.. It participates in protein modification; lipoprotein biosynthesis (signal peptide cleavage). Functionally, this protein specifically catalyzes the removal of signal peptides from prolipoproteins. The sequence is that of Lipoprotein signal peptidase from Salmonella choleraesuis (strain SC-B67).